Consider the following 883-residue polypeptide: Putative GTP diphosphokinase RSH1, chloroplastic (883 aa).

A chloroplast-targeting transit peptide spans 1-55 (MTSASSMSVSVECVNICNLTKGDGNARSDCSALSCAWKAPRALTGFLASTAHPPV). In terms of domain architecture, HD spans 172–279 (FIIHPVAVAR…VKLADRLHNM (108 aa)). The region spanning 562–625 (LGSRVFVFTP…ENAEVVEIVT (64 aa)) is the TGS domain. Residues 710–726 (QSQDKSRDTTPAPQNGS) are compositionally biased toward polar residues. Residues 710–746 (QSQDKSRDTTPAPQNGSVWAPKVNGKHNKAIKNSSSD) form a disordered region. Residues 796–867 (WLCVVSMDRK…LVLGVLGWSS (72 aa)) form the ACT domain.

It belongs to the RelA/SpoT family. Interacts with RPP5.

Its subcellular location is the plastid. The protein localises to the chloroplast. The catalysed reaction is GTP + ATP = guanosine 3'-diphosphate 5'-triphosphate + AMP. May be involved in a rapid plant ppGpp (guanosine 3'-diphosphate 5'-diphosphate)-mediated response to pathogens and other stresses. The polypeptide is Putative GTP diphosphokinase RSH1, chloroplastic (RSH1) (Arabidopsis thaliana (Mouse-ear cress)).